We begin with the raw amino-acid sequence, 359 residues long: Putative nucleotidyltransferase MAB21L1 (359 aa).

A ribonucleoside 5'-triphosphate-binding positions include 23–24 and 63–66; these read RK and YEGL. Positions 73 and 75 each coordinate Mg(2+). A ribonucleoside 5'-triphosphate contacts are provided by residues lysine 248 and 252-255; that span reads SILK.

This sequence belongs to the mab-21 family. In terms of assembly, monomer. Homodecamer; composed of 2 back to back homopentamers. The protein may exist as monomer in solution and oiligomerizes upon ligand binding.

Its subcellular location is the nucleus. In terms of biological role, putative nucleotidyltransferase required for several aspects of embryonic development including normal development of the eye. It is unclear whether it displays nucleotidyltransferase activity in vivo. Binds single-stranded RNA (ssRNA). In Bos taurus (Bovine), this protein is Putative nucleotidyltransferase MAB21L1 (MAB21L1).